Reading from the N-terminus, the 323-residue chain is Phospho-N-acetylmuramoyl-pentapeptide-transferase (323 aa).

Helical transmembrane passes span 12-32, 58-78, 84-104, 120-140, 151-171, 177-197, 200-220, 229-250, and 303-323; these read IVMA…IIIP, PTIG…IMVG, AMIA…DDLL, MILL…YIGT, INFG…VTNA, GLDG…GIIS, LGHI…LAFL, VFMG…ALIL, and KIVS…FASL.

This sequence belongs to the glycosyltransferase 4 family. MraY subfamily. The cofactor is Mg(2+).

The protein resides in the cell membrane. The catalysed reaction is UDP-N-acetyl-alpha-D-muramoyl-L-alanyl-gamma-D-glutamyl-meso-2,6-diaminopimeloyl-D-alanyl-D-alanine + di-trans,octa-cis-undecaprenyl phosphate = di-trans,octa-cis-undecaprenyl diphospho-N-acetyl-alpha-D-muramoyl-L-alanyl-D-glutamyl-meso-2,6-diaminopimeloyl-D-alanyl-D-alanine + UMP. The protein operates within cell wall biogenesis; peptidoglycan biosynthesis. In terms of biological role, catalyzes the initial step of the lipid cycle reactions in the biosynthesis of the cell wall peptidoglycan: transfers peptidoglycan precursor phospho-MurNAc-pentapeptide from UDP-MurNAc-pentapeptide onto the lipid carrier undecaprenyl phosphate, yielding undecaprenyl-pyrophosphoryl-MurNAc-pentapeptide, known as lipid I. This is Phospho-N-acetylmuramoyl-pentapeptide-transferase from Clostridium perfringens (strain ATCC 13124 / DSM 756 / JCM 1290 / NCIMB 6125 / NCTC 8237 / Type A).